The primary structure comprises 365 residues: Chorismate synthase (365 aa).

Residue Arg48 coordinates NADP(+). FMN-binding positions include 125 to 127, 238 to 239, Gly278, 293 to 297, and Arg319; these read RSS, NA, and KPTSS.

Belongs to the chorismate synthase family. As to quaternary structure, homotetramer. FMNH2 is required as a cofactor.

It catalyses the reaction 5-O-(1-carboxyvinyl)-3-phosphoshikimate = chorismate + phosphate. The protein operates within metabolic intermediate biosynthesis; chorismate biosynthesis; chorismate from D-erythrose 4-phosphate and phosphoenolpyruvate: step 7/7. In terms of biological role, catalyzes the anti-1,4-elimination of the C-3 phosphate and the C-6 proR hydrogen from 5-enolpyruvylshikimate-3-phosphate (EPSP) to yield chorismate, which is the branch point compound that serves as the starting substrate for the three terminal pathways of aromatic amino acid biosynthesis. This reaction introduces a second double bond into the aromatic ring system. The polypeptide is Chorismate synthase (Ruthia magnifica subsp. Calyptogena magnifica).